The sequence spans 433 residues: MHIVVVGLSHRTAPVEVREKLSIPDQSISESLKTLSINSDILEVSILSTCNRLEIYALVKEINIGISSIKEFLTDYSSVNFEDLNPHLFDFRQEEAVLHLMKVSAGLDSLVLGEGQILSQVKKMMRLGQENQSTGPILNRLLSQSVSAGKKVRSETNLGTGAVSISSAAVELAQLKIGQDHGVDGLVSLKSEKVLVVGAGRMSRLLITHLKSKGCNRLTLLNRNIERAVNLAGDFPDLEINCKSLNELDKNISLSSLVFTSTASEKPFIDLARVEKISLNNKLKFIDIGVPRNISNDVKHHAFIESFDVDDLEEVVSRNQEFRQKIAKEAESLVKDERIIFLEWWASLEAVPVINKLRSDLELIRKEELQKALSRMGPDFSARERKVVEALTKGIINKILHTPVTKLRSPQSRDERQASLKIVEKLFSLVDDE.

Residues T49–R52, S109, E114–Q116, and Q120 contribute to the substrate site. The active-site Nucleophile is C50. G198–S203 lines the NADP(+) pocket.

The protein belongs to the glutamyl-tRNA reductase family. In terms of assembly, homodimer.

It catalyses the reaction (S)-4-amino-5-oxopentanoate + tRNA(Glu) + NADP(+) = L-glutamyl-tRNA(Glu) + NADPH + H(+). The protein operates within porphyrin-containing compound metabolism; protoporphyrin-IX biosynthesis; 5-aminolevulinate from L-glutamyl-tRNA(Glu): step 1/2. It functions in the pathway porphyrin-containing compound metabolism; chlorophyll biosynthesis. Its function is as follows. Catalyzes the NADPH-dependent reduction of glutamyl-tRNA(Glu) to glutamate 1-semialdehyde (GSA). The chain is Glutamyl-tRNA reductase from Prochlorococcus marinus subsp. pastoris (strain CCMP1986 / NIES-2087 / MED4).